We begin with the raw amino-acid sequence, 172 residues long: Translationally-controlled tumor protein homolog (172 aa).

Positions 1 to 172 (MKIYKDIITG…FKHGLDEEKC (172 aa)) constitute a TCTP domain.

It belongs to the TCTP family.

The protein resides in the cytoplasm. Functionally, involved in calcium binding and microtubule stabilization. In Drosophila yakuba (Fruit fly), this protein is Translationally-controlled tumor protein homolog.